A 481-amino-acid chain; its full sequence is Glutamyl-tRNA(Gln) amidotransferase subunit A (481 aa).

Residues lysine 78 and serine 153 each act as charge relay system in the active site. Serine 177 acts as the Acyl-ester intermediate in catalysis.

The protein belongs to the amidase family. GatA subfamily. In terms of assembly, heterotrimer of A, B and C subunits.

It catalyses the reaction L-glutamyl-tRNA(Gln) + L-glutamine + ATP + H2O = L-glutaminyl-tRNA(Gln) + L-glutamate + ADP + phosphate + H(+). In terms of biological role, allows the formation of correctly charged Gln-tRNA(Gln) through the transamidation of misacylated Glu-tRNA(Gln) in organisms which lack glutaminyl-tRNA synthetase. The reaction takes place in the presence of glutamine and ATP through an activated gamma-phospho-Glu-tRNA(Gln). The protein is Glutamyl-tRNA(Gln) amidotransferase subunit A of Borrelia garinii subsp. bavariensis (strain ATCC BAA-2496 / DSM 23469 / PBi) (Borreliella bavariensis).